The chain runs to 367 residues: Metacaspase-1 (367 aa).

A disordered region spans residues 47 to 77 (DPRTAPPPQPSSAPSPPPQIHAPPGQLPHPH). The span at 50–73 (TAPPPQPSSAPSPPPQIHAPPGQL) shows a compositional bias: pro residues. Catalysis depends on residues H164 and C220.

It belongs to the peptidase C14B family. Interacts (via N-terminus) with LSD1. Proteolytically processed; by an autocatalytic mechanism.

Its function is as follows. Cysteine protease that cleaves specifically after arginine or lysine residues. Does not cleave caspase-specific substrates. Acts as a positive regulator of cell death. Required for both oxidative stress cell death response and hypersensitive cell death response mediated by immune response. This is Metacaspase-1 (AMC1) from Arabidopsis thaliana (Mouse-ear cress).